A 94-amino-acid chain; its full sequence is Pyrimidine/purine nucleoside phosphorylase (94 aa).

Belongs to the nucleoside phosphorylase PpnP family.

The catalysed reaction is a purine D-ribonucleoside + phosphate = a purine nucleobase + alpha-D-ribose 1-phosphate. It carries out the reaction adenosine + phosphate = alpha-D-ribose 1-phosphate + adenine. The enzyme catalyses cytidine + phosphate = cytosine + alpha-D-ribose 1-phosphate. It catalyses the reaction guanosine + phosphate = alpha-D-ribose 1-phosphate + guanine. The catalysed reaction is inosine + phosphate = alpha-D-ribose 1-phosphate + hypoxanthine. It carries out the reaction thymidine + phosphate = 2-deoxy-alpha-D-ribose 1-phosphate + thymine. The enzyme catalyses uridine + phosphate = alpha-D-ribose 1-phosphate + uracil. It catalyses the reaction xanthosine + phosphate = alpha-D-ribose 1-phosphate + xanthine. Functionally, catalyzes the phosphorolysis of diverse nucleosides, yielding D-ribose 1-phosphate and the respective free bases. Can use uridine, adenosine, guanosine, cytidine, thymidine, inosine and xanthosine as substrates. Also catalyzes the reverse reactions. This is Pyrimidine/purine nucleoside phosphorylase from Vibrio campbellii (strain ATCC BAA-1116).